The following is a 530-amino-acid chain: Chondroitin sulfate N-acetylgalactosaminyltransferase 1 (530 aa).

The Cytoplasmic portion of the chain corresponds to 1–12 (MVRRGLLGWISR). Residues 13-33 (VVILLVLLCCAISVLYMLACT) traverse the membrane as a helical; Signal-anchor for type II membrane protein segment. Residues 34–530 (PKGDQEQLGL…QKQKASSKKT (497 aa)) lie on the Lumenal side of the membrane. Positions 57–93 (AVLQEREEQHRNYVNSLKRQIAQLKDELQARSEQFRS) form a coiled coil. The disordered stretch occupies residues 88–107 (SEQFRSGQDQASDATSLRSG). The span at 91–105 (FRSGQDQASDATSLR) shows a compositional bias: polar residues. N-linked (GlcNAc...) asparagine glycosylation is found at asparagine 313 and asparagine 322. Positions 358 and 475 each coordinate a divalent metal cation.

This sequence belongs to the chondroitin N-acetylgalactosaminyltransferase family.

It localises to the golgi apparatus. The protein localises to the golgi stack membrane. The enzyme catalyses 3-O-(beta-D-GlcA-(1-&gt;3)-beta-D-Gal-(1-&gt;3)-beta-D-Gal-(1-&gt;4)-beta-D-Xyl)-L-seryl-[protein] + UDP-N-acetyl-alpha-D-galactosamine = 3-O-(beta-D-GalNAc-(1-&gt;4)-beta-D-GlcA-(1-&gt;3)-beta-D-Gal-(1-&gt;3)-beta-D-Gal-(1-&gt;4)-beta-D-Xyl)-L-seryl-[protein] + UDP + H(+). Functionally, transfers 1,4-N-acetylgalactosamine (GalNAc) from UDP-GalNAc to the non-reducing end of glucuronic acid (GlcUA). Required for addition of the first GalNAc to the core tetrasaccharide linker and for elongation of chondroitin chains. Important role in chondroitin chain biosynthesis in cartilage formation, and subsequent endochondral ossification. Moreover, is involved in the metabolism of aggrecan. This is Chondroitin sulfate N-acetylgalactosaminyltransferase 1 from Mus musculus (Mouse).